We begin with the raw amino-acid sequence, 178 residues long: ATP synthase subunit delta (178 aa).

The protein belongs to the ATPase delta chain family. F-type ATPases have 2 components, F(1) - the catalytic core - and F(0) - the membrane proton channel. F(1) has five subunits: alpha(3), beta(3), gamma(1), delta(1), epsilon(1). F(0) has three main subunits: a(1), b(2) and c(10-14). The alpha and beta chains form an alternating ring which encloses part of the gamma chain. F(1) is attached to F(0) by a central stalk formed by the gamma and epsilon chains, while a peripheral stalk is formed by the delta and b chains.

The protein resides in the cell membrane. In terms of biological role, f(1)F(0) ATP synthase produces ATP from ADP in the presence of a proton or sodium gradient. F-type ATPases consist of two structural domains, F(1) containing the extramembraneous catalytic core and F(0) containing the membrane proton channel, linked together by a central stalk and a peripheral stalk. During catalysis, ATP synthesis in the catalytic domain of F(1) is coupled via a rotary mechanism of the central stalk subunits to proton translocation. This protein is part of the stalk that links CF(0) to CF(1). It either transmits conformational changes from CF(0) to CF(1) or is implicated in proton conduction. The chain is ATP synthase subunit delta from Lysinibacillus sphaericus (strain C3-41).